Reading from the N-terminus, the 161-residue chain is Decarboxylase (161 aa).

Residues 29–131 enclose the EthD domain; it reads QGMSEEAYRK…VGDHENFADT (103 aa).

Belongs to the tpcK family.

It catalyses the reaction atrochrysone carboxylate + H(+) = atrochrysone + CO2. The protein operates within secondary metabolite biosynthesis. Its function is as follows. Decarboxylase; part of the gene cluster that mediates the biosynthesis of monodictyphenone, a prenyl xanthone derivative. The pathway begins with the synthesis of atrochrysone thioester by the polyketide synthase (PKS) mdpG. The atrochrysone carboxyl ACP thioesterase mdpF then breaks the thioester bond and releases the atrochrysone carboxylic acid from mdpG. The atrochrysone carboxylic acid is then converted to atrochrysone which is further transformed into emodin anthrone by mdpH-1 and mdpH-2. Emodin is further modified to yield monodictyphenone via several steps involving mdpB, mdpC mdpJ, mdpK and mdpL. These enzymes with xptA, xptB and xptC are also proposed to be involved in the synthesis of shamixanthone from emodin. Especially, direct reduction of emodin by the short chain dehydrogenase mdpC followed by dehydration catalyzed by the scytalone dehydratase-like protein mdpB gives loss of oxygen and formation of chrysophanol intermediate in two simple steps. The sequence is that of Decarboxylase from Emericella nidulans (strain FGSC A4 / ATCC 38163 / CBS 112.46 / NRRL 194 / M139) (Aspergillus nidulans).